We begin with the raw amino-acid sequence, 552 residues long: MHCERFLCILRIIGTTLFGVSLLLGITAAYIVGYQFIQTDNYYFSFGLYGAFLASHLIIQSLFAFLEHRKMKKSLETPIKLNKTVALCIAAYQEDPDYLRKCLQSVKRLTYPGIKVVMVIDGNSEDDLYMMDIFSEVMGRDKSATYIWKNNYHVKGPGETDESHKESSQHVTQLVLSNKSICTMQKWGGKREVMYTAFRALGRSVDYVQVCDSDTMLDPASSVEMVKVLEEDPMVGGVGGDVQILNKYDSWISFLSSVRYWMAFNIERACQSYFGCVQCISGPLGMYRNSLLHEFVEDWYNQEFMGSQCSFGDDRHLTNRVLSLGYATKYTARSKCLTETPIEYLRWLNQQTRWSKSYFREWLYNAMWFHKHHLWMTYEAVITGFFPFFLIATVIQLFYRGKIWNTLLFLLTVQLVGLIKSSFASCLRGNIVMVFMSLYSVLYMSSLLPAKMFAIATINKAGWGTSGRKTIVVNFIGLIPVSVWFTILLGGVIFTIYKESKKPFSESKQTVLIVGTLLYACYWVMLLTLYVVLINKCGRRKKGQQYDMVLDV.

Topologically, residues 1-11 (MHCERFLCILR) are cytoplasmic. Residues 12–32 (IIGTTLFGVSLLLGITAAYIV) form a helical membrane-spanning segment. At 33-45 (GYQFIQTDNYYFS) the chain is on the extracellular side. The helical transmembrane segment at 46–66 (FGLYGAFLASHLIIQSLFAFL) threads the bilayer. The Cytoplasmic segment spans residues 67-374 (EHRKMKKSLE…NAMWFHKHHL (308 aa)). The residue at position 110 (Thr-110) is a Phosphothreonine. Residue Lys-190 forms a Glycyl lysine isopeptide (Lys-Gly) (interchain with G-Cter in ubiquitin) linkage. O-linked (GlcNAc) serine glycosylation is present at Ser-221. At Thr-328 the chain carries Phosphothreonine. A helical membrane pass occupies residues 375-395 (WMTYEAVITGFFPFFLIATVI). Residues 396–402 (QLFYRGK) are Extracellular-facing. The helical transmembrane segment at 403–423 (IWNTLLFLLTVQLVGLIKSSF) threads the bilayer. Residues 424–429 (ASCLRG) are Cytoplasmic-facing. The helical transmembrane segment at 430–450 (NIVMVFMSLYSVLYMSSLLPA) threads the bilayer. Topologically, residues 451-475 (KMFAIATINKAGWGTSGRKTIVVNF) are extracellular. A helical membrane pass occupies residues 476 to 496 (IGLIPVSVWFTILLGGVIFTI). Over 497–510 (YKESKKPFSESKQT) the chain is Cytoplasmic. Residues 511–531 (VLIVGTLLYACYWVMLLTLYV) form a helical membrane-spanning segment. The Extracellular segment spans residues 532–552 (VLINKCGRRKKGQQYDMVLDV).

This sequence belongs to the NodC/HAS family. In terms of assembly, homodimer; dimerization promotes enzymatic activity. Forms heterodimer with HAS3. Forms heterodimer with HAS1. The cofactor is Mg(2+). Post-translationally, phosphorylation at Thr-328 is essential for hyaluronan synthase activity. In terms of processing, O-GlcNAcylation at Ser-221 increases the stability of HAS2 and plasma membrane localization. Ubiquitination at Lys-190; this ubiquitination is essential for hyaluronan synthase activity and homo- or hetero-oligomerization. Can also be poly-ubiquitinated. Deubiquitinated by USP17 and USP4. USP17 efficiently removes 'Lys-63'- and 'Lys-48'-linked polyubiquitin chains, whereas USP4 preferentially removes monoubiquitination and, partially, both 'Lys-63'- and 'Lys-48'-linked polyubiquitin chain. As to expression, expressed in corneal endothelial cells.

It is found in the cell membrane. The protein resides in the endoplasmic reticulum membrane. It localises to the vesicle. The protein localises to the golgi apparatus membrane. Its subcellular location is the lysosome. It catalyses the reaction [hyaluronan](n) + UDP-N-acetyl-alpha-D-glucosamine = N-acetyl-beta-D-glucosaminyl-(1-&gt;4)-[hyaluronan](n) + UDP + H(+). It carries out the reaction N-acetyl-beta-D-glucosaminyl-(1-&gt;4)-[hyaluronan](n) + UDP-alpha-D-glucuronate = [hyaluronan](n+1) + UDP + H(+). Its pathway is glycan biosynthesis; hyaluronan biosynthesis. Its function is as follows. Catalyzes the addition of GlcNAc or GlcUA monosaccharides to the nascent hyaluronan polymer. Therefore, it is essential to hyaluronan synthesis a major component of most extracellular matrices that has a structural role in tissues architectures and regulates cell adhesion, migration and differentiation. This is one of three isoenzymes responsible for cellular hyaluronan synthesis and it is particularly responsible for the synthesis of high molecular mass hyaluronan. This chain is Hyaluronan synthase 2 (HAS2), found in Bos taurus (Bovine).